The primary structure comprises 550 residues: Hydroxylamine reductase (550 aa).

4 residues coordinate [2Fe-2S] cluster: cysteine 3, cysteine 6, cysteine 18, and cysteine 25. Positions 249, 273, 317, 405, 433, 458, 492, and 494 each coordinate hybrid [4Fe-2O-2S] cluster. Cysteine 405 bears the Cysteine persulfide mark.

This sequence belongs to the HCP family. The cofactor is [2Fe-2S] cluster. It depends on hybrid [4Fe-2O-2S] cluster as a cofactor.

The protein resides in the cytoplasm. It catalyses the reaction A + NH4(+) + H2O = hydroxylamine + AH2 + H(+). Catalyzes the reduction of hydroxylamine to form NH(3) and H(2)O. The protein is Hydroxylamine reductase of Salmonella typhimurium (strain LT2 / SGSC1412 / ATCC 700720).